Here is a 462-residue protein sequence, read N- to C-terminus: UDP-N-acetylmuramate--L-alanine ligase (462 aa).

112-118 (GTHGKTT) serves as a coordination point for ATP.

It belongs to the MurCDEF family.

Its subcellular location is the cytoplasm. The catalysed reaction is UDP-N-acetyl-alpha-D-muramate + L-alanine + ATP = UDP-N-acetyl-alpha-D-muramoyl-L-alanine + ADP + phosphate + H(+). It participates in cell wall biogenesis; peptidoglycan biosynthesis. Its function is as follows. Cell wall formation. The polypeptide is UDP-N-acetylmuramate--L-alanine ligase (Geobacter sulfurreducens (strain ATCC 51573 / DSM 12127 / PCA)).